Reading from the N-terminus, the 156-residue chain is Small ribosomal subunit protein uS7 (156 aa).

Belongs to the universal ribosomal protein uS7 family. In terms of assembly, part of the 30S ribosomal subunit. Contacts proteins S9 and S11.

Its function is as follows. One of the primary rRNA binding proteins, it binds directly to 16S rRNA where it nucleates assembly of the head domain of the 30S subunit. Is located at the subunit interface close to the decoding center, probably blocks exit of the E-site tRNA. This Ruminiclostridium cellulolyticum (strain ATCC 35319 / DSM 5812 / JCM 6584 / H10) (Clostridium cellulolyticum) protein is Small ribosomal subunit protein uS7.